The chain runs to 460 residues: C4-dicarboxylate transport protein (460 aa).

8 helical membrane passes run 21–38, 53–75, 88–110, 153–175, 196–218, 231–253, 301–323, and 363–385; these read LYFQ…IGHF, FIKL…GIAG, YALL…VVNV, IVGA…FGFA, VMFN…AMAF, LGQL…LGSI, VVGL…YLTM, and FIVL…ALIL. The segment at 438 to 460 is disordered; that stretch reads PEDDLGVAEGPTPANAVNTTKTV.

Belongs to the dicarboxylate/amino acid:cation symporter (DAACS) (TC 2.A.23) family.

The protein resides in the cell inner membrane. Its function is as follows. Responsible for the transport of dicarboxylates such as succinate, fumarate, and malate from the periplasm across the membrane. The protein is C4-dicarboxylate transport protein of Pseudomonas syringae pv. tomato (strain ATCC BAA-871 / DC3000).